A 653-amino-acid chain; its full sequence is Structural protein ORF653 (653 aa).

Positions 300 to 330 (AKEETKQETKQETGKEEEEKKETKQESQEQL) form a coiled coil. A compositionally biased stretch (basic and acidic residues) spans 302–326 (EETKQETKQETGKEEEEKKETKQES). Disordered stretches follow at residues 302–329 (EETK…SQEQ), 344–388 (GQPA…ENTP), and 626–653 (AGQQ…VKLS). The segment covering 371-381 (EENNAEAPQQR) has biased composition (low complexity). The stretch at 505 to 649 (KEQELYKELD…EEEEEEGNDT (145 aa)) forms a coiled coil. The span at 630–647 (EETDETTEEEEEEEEEGN) shows a compositional bias: acidic residues.

It is found in the virion. This chain is Structural protein ORF653, found in Acidianus two-tailed virus (ATV).